Consider the following 426-residue polypeptide: Stationary phase-inducible protein CsiE (426 aa).

PRD domains are found at residues 120-225 (ARNF…DPLR) and 229-336 (QRDR…ENDL).

The protein is Stationary phase-inducible protein CsiE (csiE) of Escherichia coli (strain K12).